The following is a 1486-amino-acid chain: Chromosome partition protein MukB (1486 aa).

34–41 (GGNGAGKS) is an ATP binding site. Coiled-coil stretches lie at residues 326-418 (LEAD…QYNQ), 444-480 (LETF…QAYQ), and 509-603 (RHLA…RAPV). The tract at residues 666–783 (PGGSEDQRLN…EVPLFGRAAR (118 aa)) is flexible hinge. 3 coiled-coil regions span residues 835–923 (EAEI…AKLE), 977–1115 (EMLS…TAKA), and 1209–1266 (VEAI…QNVS).

It belongs to the SMC family. MukB subfamily. As to quaternary structure, homodimerization via its hinge domain. Binds to DNA via its C-terminal region. Interacts, and probably forms a ternary complex, with MukE and MukF via its C-terminal region. The complex formation is stimulated by calcium or magnesium. Interacts with tubulin-related protein FtsZ.

The protein localises to the cytoplasm. It is found in the nucleoid. Functionally, plays a central role in chromosome condensation, segregation and cell cycle progression. Functions as a homodimer, which is essential for chromosome partition. Involved in negative DNA supercoiling in vivo, and by this means organize and compact chromosomes. May achieve or facilitate chromosome segregation by condensation DNA from both sides of a centrally located replisome during cell division. The protein is Chromosome partition protein MukB of Shigella boydii serotype 18 (strain CDC 3083-94 / BS512).